The sequence spans 317 residues: uncharacterized protein (317 aa).

This is an uncharacterized protein from Lactuca sativa (Garden lettuce).